Reading from the N-terminus, the 67-residue chain is MQNDWIKLKEFFIYIFLFIDKTNVESITMWNLTQNEYLTLMVGVWIVILFLTWFLLWMVFKIVGYFK.

A run of 2 helical transmembrane segments spans residues 10 to 30 (EFFIYIFLFIDKTNVESITMW) and 40 to 60 (LMVGVWIVILFLTWFLLWMVF).

This sequence belongs to the plectrovirus ORF10 family.

Its subcellular location is the host membrane. This is an uncharacterized protein from Spiroplasma citri (SpV1).